Reading from the N-terminus, the 471-residue chain is Adenosylhomocysteinase (471 aa).

Substrate contacts are provided by T60, D135, and E196. An NAD(+)-binding site is contributed by 197–199 (TTT). 2 residues coordinate substrate: K226 and D230. Residues N231, 260 to 265 (GYGDVG), E283, N318, 339 to 341 (IGH), and N387 contribute to the NAD(+) site.

It belongs to the adenosylhomocysteinase family. Requires NAD(+) as cofactor.

The protein localises to the cytoplasm. The catalysed reaction is S-adenosyl-L-homocysteine + H2O = L-homocysteine + adenosine. It participates in amino-acid biosynthesis; L-homocysteine biosynthesis; L-homocysteine from S-adenosyl-L-homocysteine: step 1/1. Its function is as follows. May play a key role in the regulation of the intracellular concentration of adenosylhomocysteine. The sequence is that of Adenosylhomocysteinase from Chlorobaculum parvum (strain DSM 263 / NCIMB 8327) (Chlorobium vibrioforme subsp. thiosulfatophilum).